The sequence spans 605 residues: SET domain-containing protein SNOG_11806 (605 aa).

The tract at residues 68 to 132 (TLDLTGMKTP…SRKGTGGLRV (65 aa)) is disordered. The segment covering 75–89 (KTPQPSRSPTVTRNV) has biased composition (polar residues). The span at 104 to 115 (ESADDDDDDLQD) shows a compositional bias: acidic residues. In terms of domain architecture, SET spans 473 to 579 (PPVQIYRTAE…AGSEITVDYG (107 aa)).

The protein belongs to the class V-like SAM-binding methyltransferase superfamily.

The chain is SET domain-containing protein SNOG_11806 from Phaeosphaeria nodorum (strain SN15 / ATCC MYA-4574 / FGSC 10173) (Glume blotch fungus).